The following is a 96-amino-acid chain: Small ribosomal subunit protein bS6 (96 aa).

The protein belongs to the bacterial ribosomal protein bS6 family.

In terms of biological role, binds together with bS18 to 16S ribosomal RNA. This Streptococcus uberis (strain ATCC BAA-854 / 0140J) protein is Small ribosomal subunit protein bS6.